The sequence spans 168 residues: uncharacterized protein (168 aa).

The segment at residues 1 to 21 (MKLLKALAVLSLATISSHSFA) is a signal peptide (or 19).

This is an uncharacterized protein from Haemophilus influenzae (strain ATCC 51907 / DSM 11121 / KW20 / Rd).